Reading from the N-terminus, the 587-residue chain is Phosphomethylpyrimidine synthase (587 aa).

The disordered stretch occupies residues 1–58 (MTPTQNEIHPKHSYSPIRKDGLEVPETEIRLDDSPSGPNEPFRIYRTRGPETNPKQGL). Over residues 17–33 (IRKDGLEVPETEIRLDD) the composition is skewed to basic and acidic residues. Substrate is bound by residues asparagine 180, methionine 209, tyrosine 238, histidine 274, 294–296 (SRG), 335–338 (DGLR), and glutamate 374. Histidine 378 contributes to the Zn(2+) binding site. Position 401 (tyrosine 401) interacts with substrate. A Zn(2+)-binding site is contributed by histidine 442. 3 residues coordinate [4Fe-4S] cluster: cysteine 522, cysteine 525, and cysteine 530.

The protein belongs to the ThiC family. It depends on [4Fe-4S] cluster as a cofactor.

It carries out the reaction 5-amino-1-(5-phospho-beta-D-ribosyl)imidazole + S-adenosyl-L-methionine = 4-amino-2-methyl-5-(phosphooxymethyl)pyrimidine + CO + 5'-deoxyadenosine + formate + L-methionine + 3 H(+). The protein operates within cofactor biosynthesis; thiamine diphosphate biosynthesis. Its function is as follows. Catalyzes the synthesis of the hydroxymethylpyrimidine phosphate (HMP-P) moiety of thiamine from aminoimidazole ribotide (AIR) in a radical S-adenosyl-L-methionine (SAM)-dependent reaction. In Corynebacterium glutamicum (strain ATCC 13032 / DSM 20300 / JCM 1318 / BCRC 11384 / CCUG 27702 / LMG 3730 / NBRC 12168 / NCIMB 10025 / NRRL B-2784 / 534), this protein is Phosphomethylpyrimidine synthase.